Consider the following 161-residue polypeptide: Protein-export protein SecB (161 aa).

Belongs to the SecB family. As to quaternary structure, homotetramer, a dimer of dimers. One homotetramer interacts with 1 SecA dimer.

The protein localises to the cytoplasm. In terms of biological role, one of the proteins required for the normal export of preproteins out of the cell cytoplasm. It is a molecular chaperone that binds to a subset of precursor proteins, maintaining them in a translocation-competent state. It also specifically binds to its receptor SecA. In Shewanella pealeana (strain ATCC 700345 / ANG-SQ1), this protein is Protein-export protein SecB.